We begin with the raw amino-acid sequence, 207 residues long: ATP-dependent dethiobiotin synthetase BioD (207 aa).

11–16 lines the ATP pocket; that stretch reads DVGKTF. T15 lines the Mg(2+) pocket. K31 is a catalytic residue. S35 is a substrate binding site. Residues D42, 95 to 98, and 155 to 156 each bind ATP; these read ETSG and NQ. The Mg(2+) site is built by D42 and E95.

The protein belongs to the dethiobiotin synthetase family. In terms of assembly, homodimer. The cofactor is Mg(2+).

The protein localises to the cytoplasm. The enzyme catalyses (7R,8S)-7,8-diammoniononanoate + CO2 + ATP = (4R,5S)-dethiobiotin + ADP + phosphate + 3 H(+). It participates in cofactor biosynthesis; biotin biosynthesis; biotin from 7,8-diaminononanoate: step 1/2. In terms of biological role, catalyzes a mechanistically unusual reaction, the ATP-dependent insertion of CO2 between the N7 and N8 nitrogen atoms of 7,8-diaminopelargonic acid (DAPA, also called 7,8-diammoniononanoate) to form a ureido ring. This chain is ATP-dependent dethiobiotin synthetase BioD, found in Chlamydia abortus (strain DSM 27085 / S26/3) (Chlamydophila abortus).